Consider the following 374-residue polypeptide: LIM domain-binding protein 1-A (374 aa).

3 disordered regions span residues 1–24, 249–297, and 322–374; these read MLDR…IGRH, PPAE…ALSS, and TRLE…QSSQ. Residues 267 to 297 are compositionally biased toward low complexity; that stretch reads SGGSTMSSGGGNNNNSNSKKKSPASSFALSS. In terms of domain architecture, LIM interaction domain (LID) spans 299–338; it reads DVMVVGEPTLMGGEFGDEDERLITRLENTQFDAANGIDDE. A compositionally biased stretch (polar residues) spans 341–374; that stretch reads FNSSPTMGTNSPWNSKAPSSQQGKNDNPSSQSSQ.

Belongs to the LDB family. Expressed ubiquitously in the embryo and adult.

It localises to the nucleus. Its function is as follows. Binds to the LIM domain of a wide variety of LIM domain-containing transcription factors. The protein is LIM domain-binding protein 1-A (ldb1a) of Danio rerio (Zebrafish).